Here is a 495-residue protein sequence, read N- to C-terminus: Protein YhjJ (495 aa).

The signal sequence occupies residues 1–24 (MQGTKIRLLAGSLLMLASAGYVQA).

Belongs to the peptidase M16 family.

The protein resides in the periplasm. The protein is Protein YhjJ (yhjJ) of Salmonella typhimurium (strain LT2 / SGSC1412 / ATCC 700720).